We begin with the raw amino-acid sequence, 130 residues long: Splicing regulatory small protein (130 aa).

Basic residues predominate over residues 1-10 (MRTKPQRPRA). Disordered stretches follow at residues 1–29 (MRTK…EETG) and 74–130 (GRAL…STRR). A mediates interaction with SRSF3 region spans residues 16 to 22 (GQPCGSP). The segment covering 77-98 (LEPKADPHTCPYGRKESRGEKV) has biased composition (basic and acidic residues). Residues 120–130 (SLKSGSPSTRR) are compositionally biased toward polar residues.

As to quaternary structure, interacts with SRSF3; increases SRSF3 binding to specific exons.

It is found in the nucleus. Functionally, interacts with the splicing factor SRSF3 and increases its binding to specific exons within pre-mRNA, thereby regulating exon-inclusion during alternative splicing. Does not directly bind pre-mRNA and could regulate a wider range of splicing factors through a similar mechanism. The protein is Splicing regulatory small protein of Homo sapiens (Human).